The chain runs to 252 residues: MKALIVDDEPLARNELQYLLNLNDAIDEIEEAENIEETLEKLLYNTFDLIFLDINLMDESGIDLAQKINKMKRSPHIIFATAHEKFAVKAFELNATDYILKPFEKERINQAVNKVDMAKDKSKNKDKTITPKYIDYSDDERAQTHVLPIEVDERIHILNFTDIIALSVNNGITTIDTTKQSYETTETLNHYEKKLPSSLFIKIHRATIVNKEHIQTIEHWFNYTYQLTLTHEFKYQVSRSYMKTFKQQLGLQ.

A Response regulatory domain is found at 2 to 116 (KALIVDDEPL…RINQAVNKVD (115 aa)). A 4-aspartylphosphate modification is found at aspartate 53. Positions 147-251 (LPIEVDERIH…MKTFKQQLGL (105 aa)) constitute an HTH LytTR-type domain.

In terms of processing, phosphorylated by LytS.

It localises to the cytoplasm. In terms of biological role, member of the two-component regulatory system LytR/LytS that probably regulates genes involved in cell wall metabolism. The polypeptide is Sensory transduction protein LytR (lytR) (Staphylococcus epidermidis (strain ATCC 12228 / FDA PCI 1200)).